The following is a 317-amino-acid chain: Probable methyltransferase tdiE (317 aa).

Belongs to the methyltransferase superfamily. LaeA methyltransferase family.

It participates in secondary metabolite biosynthesis. Probable methyltransferase; part of the gene cluster that mediates the biosynthesis of terrequinone A, an antitumor agent. The first step in the biosynthetic pathway for terrequinone A is formation of indole pyruvic acid (IPA) from L-tryptophan by the aminotransferase tdiD. The nonribosomal peptide synthase tdiA then immediately converts unstable IPA to didemethylasterriquinone D (DDAQ D), via condensation of 2 IPA molecules. The symmetric connectivity of the 2 IPA molecules is thought to arise by head-to-tail dual Claisen condensations facilitated by the TE domain. TdiB then catalyzes reverse prenylation by transferring dimethylallyl diphosphate to carbon atom 2' of DDAQ D, to yield asterriquinone C-1. Finally, tdiC and tdiE enzymes robustly convert asterriquinone C-1 to terrequinone A via a transformation involving regular prenylation at carbon atom 5, which requires elimination of the hydroxy group on C-5. In Emericella nidulans (strain FGSC A4 / ATCC 38163 / CBS 112.46 / NRRL 194 / M139) (Aspergillus nidulans), this protein is Probable methyltransferase tdiE.